The primary structure comprises 48 residues: Large ribosomal subunit protein bL34 (48 aa).

This sequence belongs to the bacterial ribosomal protein bL34 family.

This Gloeothece citriformis (strain PCC 7424) (Cyanothece sp. (strain PCC 7424)) protein is Large ribosomal subunit protein bL34.